The primary structure comprises 360 residues: Serine/threonine transporter SstT (360 aa).

The next 9 membrane-spanning stretches (helical) occupy residues 17–37, 40–60, 78–98, 138–158, 179–199, 212–232, 295–315, 316–336, and 339–359; these read IGIG…ITVI, FGSL…LTLV, VICL…GASY, ALAT…GLAF, VVGW…FDTI, LLLL…NPLI, MAGA…TLGI, SVDF…AAGA, and VAGG…VPYV.

This sequence belongs to the dicarboxylate/amino acid:cation symporter (DAACS) (TC 2.A.23) family.

It localises to the cell membrane. It catalyses the reaction L-serine(in) + Na(+)(in) = L-serine(out) + Na(+)(out). The catalysed reaction is L-threonine(in) + Na(+)(in) = L-threonine(out) + Na(+)(out). Functionally, involved in the import of serine and threonine into the cell, with the concomitant import of sodium (symport system). The protein is Serine/threonine transporter SstT of Streptococcus suis (strain 05ZYH33).